The sequence spans 558 residues: Factor VII-activating protease (558 aa).

Residues 1 to 23 (MFVRMLVFRVLLLIALVGKSVIG) form the signal peptide. EGF-like domains follow at residues 71–107 (DDDPCQSNPCEHGGDCIIRGDTFSCSCPAPFSGSRCQ), 109–146 (AQNKCKDNPCVHGDCLITQKHPYYRCACKYPYTGPDCS), and 148–186 (VLPACRPNPCQNGGVCSRHRRRSRFTCACPDQYKGKFCE). Disulfide bonds link cysteine 75/cysteine 86, cysteine 80/cysteine 95, cysteine 97/cysteine 106, cysteine 113/cysteine 123, cysteine 118/cysteine 134, cysteine 136/cysteine 145, cysteine 152/cysteine 163, cysteine 157/cysteine 174, cysteine 176/cysteine 185, cysteine 192/cysteine 274, cysteine 213/cysteine 255, cysteine 244/cysteine 269, cysteine 299/cysteine 433, cysteine 345/cysteine 361, cysteine 353/cysteine 422, cysteine 445/cysteine 513, cysteine 475/cysteine 491, and cysteine 503/cysteine 531. One can recognise a Kringle domain in the interval 191–274 (DCYVGDGYSY…KWEYCDVTVC (84 aa)). One can recognise a Peptidase S1 domain in the interval 312–553 (IYGGFKSTAG…FLNWIKTTMH (242 aa)). Catalysis depends on charge relay system residues histidine 360 and aspartate 409. Serine 507 serves as the catalytic Charge relay system.

This sequence belongs to the peptidase S1 family. In terms of assembly, heterodimer; disulfide-linked. Heterodimer of a 50 kDa heavy and a 27 kDa light chain linked by a disulfide bond. In terms of processing, proteolytic cleavage at Gly-23 or Met-27 can give rise to the 50 kDa heavy chain (HC) and cleavage at Arg-311 or Lys-317 can give rise to the 27 kDa light chain (LC). The HC can undergo further proteolytic cleavage giving rise to a 26 kDa fragment. The LC can undergo further proteolytic cleavage at Arg-311 leading to a 17-kDa fragment and at Arg-478 leading to a 8-kDa fragment. Liver and kidney.

The protein resides in the secreted. Cleaves the alpha-chain at multiple sites and the beta-chain between 'Lys-53' and 'Lys-54' but not the gamma-chain of fibrinogen and therefore does not initiate the formation of the fibrin clot and does not cause the fibrinolysis directly. It does not cleave (activate) prothrombin and plasminogen but converts the inactive single chain urinary plasminogen activator (pro-urokinase) to the active two chain form. Activates coagulation factor VII. May function as a tumor suppressor negatively regulating cell proliferation and cell migration. The chain is Factor VII-activating protease from Mus musculus (Mouse).